Here is a 303-residue protein sequence, read N- to C-terminus: Enoyl-CoA hydratase domain-containing protein 3, mitochondrial (303 aa).

Residues 1 to 17 constitute a mitochondrion transit peptide; sequence MAAVAVLRAFGASGPMC. Lys-110 carries the N6-succinyllysine modification.

This sequence belongs to the enoyl-CoA hydratase/isomerase family. In terms of tissue distribution, expressed in adipocytes. Expressed in blood cells, with higher expression in patients with low coronary lesions.

Its subcellular location is the mitochondrion. In terms of biological role, may play a role in fatty acid biosynthesis and insulin sensitivity. This chain is Enoyl-CoA hydratase domain-containing protein 3, mitochondrial, found in Homo sapiens (Human).